A 613-amino-acid polypeptide reads, in one-letter code: MEASKQMRVSRPYKISESSKVYHWPDHSTAVLQRLNEQRLHGLFCDVVLVVEEQQVPAHRNLLAVCSDYFNSMFTLGMREAFQKEVELVGTSYVGLKAVVDFLYSSELELDGSNIDYILETAHLLQIWTVVDFCCEYLEQEVSEDNYLYLQELASIYSLKRLDAFIDSFVLSHFSTLSFTPDFLQSISVQKLCVYLSSGQVQHKWEYDLLQVALQWLTQQPEREVHTRRVLENIRFPLFPEDILLQRVKLAMCSLLPSEANGEGFVEEAMHYHNSLVAQPVLQTKRTLLRSEECLLFVGGEVSERCLELSDDTCYLDTKNEQWVKETSLPARRSHHCVAVLGGFIFIAGGSFSRDNGGNAASNLLYRYDPRRKQWIKVASMNQRRVDFYLASIEDMLVAVGGRNENGALSSVETYSPKTNSWTYVAGLPRFTYGHAGTIYKDFVYISGGHDYQIGPYRKNLLCYDHRTDVWEERRPMTTARGWHSMCSLGDSIYSIGGSDDHMESMERFDVLGVEAYSPQCNQWTRVAPLLQANSESGVAVWQGRIYILGGYSWESTAFSRAVQVYDSEANRWSRGPDLPNAIAGVSACVCALNPRLEEKKKRNKDKCQDRGQ.

In terms of domain architecture, BTB spans 45 to 112; the sequence is CDVVLVVEEQ…LYSSELELDG (68 aa). In terms of domain architecture, BACK spans 147-249; that stretch reads YLYLQELASI…PEDILLQRVK (103 aa). 6 Kelch repeats span residues 294 to 343, 344 to 395, 396 to 442, 444 to 491, 492 to 544, and 545 to 593; these read CLLF…VLGG, FIFI…SIED, MLVA…IYKD, VYIS…SLGD, SIYS…VWQG, and RIYI…VCAL.

In terms of assembly, interacts with CUL3.

Its pathway is protein modification; protein ubiquitination. Functionally, probable substrate-specific adapter of an E3 ubiquitin-protein ligase complex which mediates the ubiquitination and subsequent proteasomal degradation of target proteins. This is Kelch-like protein 36 (Klhl36) from Mus musculus (Mouse).